The following is a 511-amino-acid chain: GMP synthase [glutamine-hydrolyzing] (511 aa).

The 191-residue stretch at 5-195 folds into the Glutamine amidotransferase type-1 domain; the sequence is IVIVLDFGGQ…LFNICGCKGD (191 aa). Cys82 acts as the Nucleophile in catalysis. Active-site residues include His169 and Glu171. The GMPS ATP-PPase domain maps to 196 to 386; the sequence is WKTSSFIEER…LGIPEKIVKR (191 aa). Residue 223-229 coordinates ATP; sequence SGGVDSS.

In terms of assembly, homodimer.

It catalyses the reaction XMP + L-glutamine + ATP + H2O = GMP + L-glutamate + AMP + diphosphate + 2 H(+). The protein operates within purine metabolism; GMP biosynthesis; GMP from XMP (L-Gln route): step 1/1. In terms of biological role, catalyzes the synthesis of GMP from XMP. The polypeptide is GMP synthase [glutamine-hydrolyzing] (Caldicellulosiruptor saccharolyticus (strain ATCC 43494 / DSM 8903 / Tp8T 6331)).